The following is a 443-amino-acid chain: MSHTMTPSEIVSELDKHIIGQNKAKKAVAVALRNRWRRQQVAEPLRQEITPKNILMIGPTGVGKTEIARRLAKLADAPFIKIEATKFTEVGYVGRDVDTIVRDLAEMAIKQTRESEMKKVRTKAEEAAEDRLLDVLLPPPRDIGFSQPEEKDSNTRQVFRKKLREGQLDDKDIELEVAAGLPSMDIMGPPGMEEMTEQIRSMFAGMGQGKKHRRKMKVKEAFKLLIDEEAAKLVNDEELKHKAIANVEQNGIVFLDEIDKIANRSELGGGEVSRQGVQRDLLPLVEGTTVSTKYGMIKTDHILFIASGAFHLSKPSDLIPELQGRFPIRVELESLSVQDFEAILTQTDASLTKQYQALLKTEEVELQFAPDGIRRLAEIAFSVNEKVENIGARRLYTVMERLLEDLSFHASKSSGETVTIDAAYVNERLGDLAVNEDLSRYVL.

ATP contacts are provided by residues Ile-19, 61–66 (GVGKTE), Asp-256, Glu-321, and Arg-393.

Belongs to the ClpX chaperone family. HslU subfamily. A double ring-shaped homohexamer of HslV is capped on each side by a ring-shaped HslU homohexamer. The assembly of the HslU/HslV complex is dependent on binding of ATP.

The protein resides in the cytoplasm. ATPase subunit of a proteasome-like degradation complex; this subunit has chaperone activity. The binding of ATP and its subsequent hydrolysis by HslU are essential for unfolding of protein substrates subsequently hydrolyzed by HslV. HslU recognizes the N-terminal part of its protein substrates and unfolds these before they are guided to HslV for hydrolysis. The chain is ATP-dependent protease ATPase subunit HslU from Cupriavidus pinatubonensis (strain JMP 134 / LMG 1197) (Cupriavidus necator (strain JMP 134)).